The following is a 276-amino-acid chain: uncharacterized protein (276 aa).

Residues proline 20–serine 137 form the AB hydrolase-1 domain. Residues glycine 57–tyrosine 76 form a disordered region.

Belongs to the AB hydrolase superfamily.

This is an uncharacterized protein from Staphylococcus aureus (strain bovine RF122 / ET3-1).